The primary structure comprises 275 residues: Polyamine aminopropyltransferase (275 aa).

The region spanning 2–235 is the PABS domain; sequence EFWFTEKQTE…GMWTFTIGSK (234 aa). Position 31 (Q31) interacts with S-methyl-5'-thioadenosine. Spermidine is bound by residues H62 and D86. S-methyl-5'-thioadenosine is bound by residues D106 and 137-138; that span reads DG. Catalysis depends on D155, which acts as the Proton acceptor. Residue 155-158 coordinates spermidine; that stretch reads DSTE. P162 is an S-methyl-5'-thioadenosine binding site.

It belongs to the spermidine/spermine synthase family. As to quaternary structure, homodimer or homotetramer.

It localises to the cytoplasm. It catalyses the reaction S-adenosyl 3-(methylsulfanyl)propylamine + putrescine = S-methyl-5'-thioadenosine + spermidine + H(+). It functions in the pathway amine and polyamine biosynthesis; spermidine biosynthesis; spermidine from putrescine: step 1/1. Functionally, catalyzes the irreversible transfer of a propylamine group from the amino donor S-adenosylmethioninamine (decarboxy-AdoMet) to putrescine (1,4-diaminobutane) to yield spermidine. The protein is Polyamine aminopropyltransferase of Shouchella clausii (strain KSM-K16) (Alkalihalobacillus clausii).